Here is a 105-residue protein sequence, read N- to C-terminus: Transcription factor S (105 aa).

Cys-5, Cys-8, Cys-21, Cys-24, Cys-66, Cys-69, Cys-94, and Cys-97 together coordinate Zn(2+). A C4-type zinc finger spans residues 5–24 (CPKCNNIMLPKNGRLKCTVC). Residues 62-102 (TRIECPSCGNMEASWWLQQTRCADEPETRFYKCKKCGHTWR) form a TFIIS-type zinc finger.

It belongs to the archaeal RpoM/eukaryotic RPA12/RPB9/RPC11 RNA polymerase family.

Its function is as follows. Induces RNA cleavage activity in the RNA polymerase. In its presence, the cleavage activity of the RNA polymerase truncates the RNA back to position +15 in a stepwise manner by releasing mainly dinucleotides from the 3'-end of the nascent RNA. The truncated RNAs are able to continue elongation. Involved in transcriptional proofreading and fidelity. Misincorporation of nucleotides during elongation of transcription leads to arrested elongation complexes which are rescued by TFS-promoted removal of a dinucleotide from the 3'-end. TFS is able to induce a cleavage resynthesis cycle in stalled elongation complexes (resulting from the next missing nucleotide or a reduced incorporation rate of a wrong nucleotide) preventing misincorporation and enabling proofreading in a post-incorporation manner. Pausing of elongation complexes is the main determinant of TFS-induced RNA cleavage. This Methanothermococcus thermolithotrophicus (Methanococcus thermolithotrophicus) protein is Transcription factor S.